Reading from the N-terminus, the 244-residue chain is ATP synthase subunit a (244 aa).

A run of 5 helical transmembrane segments spans residues 17–37 (LTNI…AILT), 75–95 (FLAL…LGLP), 112–132 (DPAI…YYGV), 170–190 (LYGN…LATS), and 221–241 (GAIQ…HKIS).

Belongs to the ATPase A chain family. In terms of assembly, F-type ATPases have 2 components, CF(1) - the catalytic core - and CF(0) - the membrane proton channel. CF(1) has five subunits: alpha(3), beta(3), gamma(1), delta(1), epsilon(1). CF(0) has three main subunits: a(1), b(2) and c(9-12). The alpha and beta chains form an alternating ring which encloses part of the gamma chain. CF(1) is attached to CF(0) by a central stalk formed by the gamma and epsilon chains, while a peripheral stalk is formed by the delta and b chains. The F(1)F(0) complex interacts with SpoIIIJ and YqjG; YqgA is found in the same complex.

The protein resides in the cell membrane. In terms of biological role, key component of the proton channel; it plays a direct role in the translocation of protons across the membrane. This Bacillus subtilis (strain 168) protein is ATP synthase subunit a.